Consider the following 240-residue polypeptide: Vesicle-associated membrane protein 727 (240 aa).

The Cytoplasmic portion of the chain corresponds to Met-1–Leu-215. Residues Leu-6–Leu-133 enclose the Longin domain. A v-SNARE coiled-coil homology domain is found at Lys-149–Gln-209. The chain crosses the membrane as a helical; Anchor for type IV membrane protein span at residues Met-216 to Phe-236. The Vesicular segment spans residues Lys-237 to Ser-240.

It belongs to the synaptobrevin family. Interacts with subunits of the class C core vacuole/endosome tethering (CORVET) complex including VPS11, VCL1, VPS18, VPS33, VPS3 and VPS8. In terms of tissue distribution, highly expressed in flowers. Detected in leaves, stems and roots.

The protein resides in the early endosome membrane. The protein localises to the endosome membrane. Its function is as follows. Involved in the targeting and/or fusion of transport vesicles to their target membrane. The chain is Vesicle-associated membrane protein 727 (VAMP727) from Arabidopsis thaliana (Mouse-ear cress).